We begin with the raw amino-acid sequence, 250 residues long: DNA repair protein RecO (250 aa).

It belongs to the RecO family.

Its function is as follows. Involved in DNA repair and RecF pathway recombination. In Rhodopseudomonas palustris (strain ATCC BAA-98 / CGA009), this protein is DNA repair protein RecO.